Consider the following 568-residue polypeptide: Phenylalanine--tRNA ligase beta subunit (568 aa).

In terms of domain architecture, B5 spans 278–353 (LTPKSFEVEL…IAYGYNEIEP (76 aa)). Residues Asp-331, Asp-337, Glu-340, and Asp-341 each contribute to the Mg(2+) site.

This sequence belongs to the phenylalanyl-tRNA synthetase beta subunit family. Type 2 subfamily. Tetramer of two alpha and two beta subunits. The cofactor is Mg(2+).

It localises to the cytoplasm. The enzyme catalyses tRNA(Phe) + L-phenylalanine + ATP = L-phenylalanyl-tRNA(Phe) + AMP + diphosphate + H(+). This is Phenylalanine--tRNA ligase beta subunit from Thermococcus gammatolerans (strain DSM 15229 / JCM 11827 / EJ3).